The chain runs to 405 residues: Phosphopentomutase (405 aa).

Residues Asp-10, Asp-303, His-308, Asp-344, His-345, and His-356 each contribute to the Mn(2+) site.

Belongs to the phosphopentomutase family. It depends on Mn(2+) as a cofactor.

The protein localises to the cytoplasm. It catalyses the reaction 2-deoxy-alpha-D-ribose 1-phosphate = 2-deoxy-D-ribose 5-phosphate. The catalysed reaction is alpha-D-ribose 1-phosphate = D-ribose 5-phosphate. Its pathway is carbohydrate degradation; 2-deoxy-D-ribose 1-phosphate degradation; D-glyceraldehyde 3-phosphate and acetaldehyde from 2-deoxy-alpha-D-ribose 1-phosphate: step 1/2. Isomerase that catalyzes the conversion of deoxy-ribose 1-phosphate (dRib-1-P) and ribose 1-phosphate (Rib-1-P) to deoxy-ribose 5-phosphate (dRib-5-P) and ribose 5-phosphate (Rib-5-P), respectively. This Shewanella pealeana (strain ATCC 700345 / ANG-SQ1) protein is Phosphopentomutase.